A 200-amino-acid chain; its full sequence is Peroxiredoxin (200 aa).

Residues 6–165 (AQIGKPAPEF…TLRLVQAFQH (160 aa)) form the Thioredoxin domain. The Cysteine sulfenic acid (-SOH) intermediate role is filled by C52.

This sequence belongs to the peroxiredoxin family. AhpC/Prx1 subfamily. In terms of assembly, homodimer; disulfide-linked, upon oxidation.

It carries out the reaction a hydroperoxide + [thioredoxin]-dithiol = an alcohol + [thioredoxin]-disulfide + H2O. Its function is as follows. Thiol-specific peroxidase that catalyzes the reduction of hydrogen peroxide and organic hydroperoxides to water and alcohols, respectively. Plays a role in cell protection against oxidative stress by detoxifying peroxides and as sensor of hydrogen peroxide-mediated signaling events. This Cynops pyrrhogaster (Japanese fire-bellied newt) protein is Peroxiredoxin.